Here is an 811-residue protein sequence, read N- to C-terminus: Mitochondrial intermediate peptidase (811 aa).

A mitochondrion-targeting transit peptide spans methionine 1 to serine 25. Residues threonine 423 to threonine 450 are disordered. Residues threonine 431–threonine 450 show a composition bias toward low complexity. Residue histidine 593 participates in Zn(2+) binding. Glutamate 594 is a catalytic residue. Residues histidine 597 and histidine 600 each contribute to the Zn(2+) site.

The protein belongs to the peptidase M3 family. Requires Zn(2+) as cofactor.

Its subcellular location is the mitochondrion matrix. The catalysed reaction is Release of an N-terminal octapeptide as second stage of processing of some proteins imported into the mitochondrion.. Its function is as follows. Cleaves proteins, imported into the mitochondrion, to their mature size. While most mitochondrial precursor proteins are processed to the mature form in one step by mitochondrial processing peptidase (MPP), the sequential cleavage by MIP of an octapeptide after initial processing by MPP is a required step for a subgroup of nuclear-encoded precursor proteins destined for the matrix or the inner membrane. The protein is Mitochondrial intermediate peptidase (OCT1) of Lodderomyces elongisporus (strain ATCC 11503 / CBS 2605 / JCM 1781 / NBRC 1676 / NRRL YB-4239) (Yeast).